A 353-amino-acid chain; its full sequence is MTAILERRESASLWGRFCNWITSTENRLYIGWFGVLMIPTLLTATSVFIIAFIAAPPVDIDGIREPVSGSLLYGNNIISGAIIPTSAAIGLHFYPIWEAASVDEWLYNGGPYELIVLHFLLGVACYMGREWELSFRLGMRPWIAVAYSAPVAAATAVFLIYPIGQGSFSDGMPLGISGTFNFMIVFQAEHNILMHPFHMLGVAGVFGGSLFSAMHGSLVTSSLIRETTENESANEGYRFGQEEETYNIVAAHGYFGRLIFQYASFNNSRSLHFFLAAWPVVGIWFTALGISTMAFNLNGFNFNQSVVDSQGRVINTWADIINRANLGMEVMHERNAHNFPLDLAAVEAPSTNG.

Threonine 2 carries the post-translational modification N-acetylthreonine. A Phosphothreonine modification is found at threonine 2. Transmembrane regions (helical) follow at residues 29 to 46 (YIGWFGVLMIPTLLTATS), 118 to 133 (HFLLGVACYMGREWEL), and 142 to 156 (WIAVAYSAPVAAATA). Position 118 (histidine 118) interacts with chlorophyll a. A pheophytin a-binding site is contributed by tyrosine 126. Residues aspartate 170 and glutamate 189 each coordinate [CaMn4O5] cluster. Residues 197–218 (FHMLGVAGVFGGSLFSAMHGSL) traverse the membrane as a helical segment. A chlorophyll a-binding site is contributed by histidine 198. A quinone-binding positions include histidine 215 and 264–265 (SF). Histidine 215 is a Fe cation binding site. Fe cation is bound at residue histidine 272. Residues 274 to 288 (FLAAWPVVGIWFTAL) form a helical membrane-spanning segment. [CaMn4O5] cluster is bound by residues histidine 332, glutamate 333, aspartate 342, and alanine 344. Residues 345–353 (AVEAPSTNG) constitute a propeptide that is removed on maturation.

This sequence belongs to the reaction center PufL/M/PsbA/D family. As to quaternary structure, PSII is composed of 1 copy each of membrane proteins PsbA, PsbB, PsbC, PsbD, PsbE, PsbF, PsbH, PsbI, PsbJ, PsbK, PsbL, PsbM, PsbT, PsbX, PsbY, PsbZ, Psb30/Ycf12, at least 3 peripheral proteins of the oxygen-evolving complex and a large number of cofactors. It forms dimeric complexes. Requires The D1/D2 heterodimer binds P680, chlorophylls that are the primary electron donor of PSII, and subsequent electron acceptors. It shares a non-heme iron and each subunit binds pheophytin, quinone, additional chlorophylls, carotenoids and lipids. D1 provides most of the ligands for the Mn4-Ca-O5 cluster of the oxygen-evolving complex (OEC). There is also a Cl(-1) ion associated with D1 and D2, which is required for oxygen evolution. The PSII complex binds additional chlorophylls, carotenoids and specific lipids. as cofactor. Post-translationally, tyr-161 forms a radical intermediate that is referred to as redox-active TyrZ, YZ or Y-Z. In terms of processing, C-terminally processed by CTPA; processing is essential to allow assembly of the oxygen-evolving complex and thus photosynthetic growth.

It localises to the plastid. The protein localises to the chloroplast thylakoid membrane. It carries out the reaction 2 a plastoquinone + 4 hnu + 2 H2O = 2 a plastoquinol + O2. Functionally, photosystem II (PSII) is a light-driven water:plastoquinone oxidoreductase that uses light energy to abstract electrons from H(2)O, generating O(2) and a proton gradient subsequently used for ATP formation. It consists of a core antenna complex that captures photons, and an electron transfer chain that converts photonic excitation into a charge separation. The D1/D2 (PsbA/PsbD) reaction center heterodimer binds P680, the primary electron donor of PSII as well as several subsequent electron acceptors. This Ceratophyllum demersum (Rigid hornwort) protein is Photosystem II protein D1.